Consider the following 370-residue polypeptide: Seipin (370 aa).

The first 18 residues, 1-18, serve as a signal peptide directing secretion; the sequence is MNILLRLIVFALDPLGLG. The Cytoplasmic portion of the chain corresponds to 19-55; sequence RRFLIRPAVNLGWNVYDRVRSKADEKVGTVRELVLRL. Residues 56-76 traverse the membrane as a helical segment; that stretch reads GLIAFAVVLIIWLAVFMYAAF. Residues 77-251 lie on the Lumenal side of the membrane; the sequence is YYVYMPAISH…GLRYIMFNWP (175 aa). Residues 252–272 traverse the membrane as a helical segment; it reads VLSAIVAISTNLFFILVVFLL. The Cytoplasmic portion of the chain corresponds to 273 to 370; that stretch reads SWYHWSDAKW…RPTKKTTADH (98 aa). The tract at residues 346-370 is disordered; the sequence is KSRSGKRESPDALRKRPTKKTTADH. A compositionally biased stretch (basic and acidic residues) spans 350–359; it reads GKRESPDALR.

In terms of tissue distribution, widely expressed, with highest levels detected in fat body, moderate levels detected in salivary gland, midgut and muscle, and weak expression detected in brain.

It is found in the endoplasmic reticulum membrane. The protein localises to the lipid droplet. Acts as a tissue-autonomous lipid modulator, preventing ectopic lipid accumulation in salivary gland (a non-adipose tissue) and in promoting lipid storage in fat tissue. Required for the growth and maturation of small nascent lipid droplets (LDs) into larger mature LDs. This Drosophila melanogaster (Fruit fly) protein is Seipin.